A 159-amino-acid chain; its full sequence is ATP synthase subunit delta, mitochondrial (159 aa).

The transit peptide at 1–23 (MFRLSAARTLAKSVNTVVAKRTY) directs the protein to the mitochondrion.

The protein belongs to the ATPase epsilon chain family. As to quaternary structure, F-type ATPases have 2 components, CF(1) - the catalytic core - and CF(0) - the membrane proton channel. CF(1) has five subunits: alpha(3), beta(3), gamma(1), delta(1), epsilon(1). CF(0) has three main subunits: a, b and c.

It is found in the mitochondrion. The protein localises to the mitochondrion inner membrane. Its function is as follows. Mitochondrial membrane ATP synthase (F(1)F(0) ATP synthase or Complex V) produces ATP from ADP in the presence of a proton gradient across the membrane which is generated by electron transport complexes of the respiratory chain. F-type ATPases consist of two structural domains, F(1) - containing the extramembraneous catalytic core, and F(0) - containing the membrane proton channel, linked together by a central stalk and a peripheral stalk. During catalysis, ATP turnover in the catalytic domain of F(1) is coupled via a rotary mechanism of the central stalk subunits to proton translocation. Part of the complex F(1) domain and of the central stalk which is part of the complex rotary element. Rotation of the central stalk against the surrounding alpha(3)beta(3) subunits leads to hydrolysis of ATP in three separate catalytic sites on the beta subunits. In Kluyveromyces lactis (strain ATCC 8585 / CBS 2359 / DSM 70799 / NBRC 1267 / NRRL Y-1140 / WM37) (Yeast), this protein is ATP synthase subunit delta, mitochondrial (ATP16).